We begin with the raw amino-acid sequence, 368 residues long: Guanylate binding protein 128up (368 aa).

Lys-22 carries the (3S)-3-hydroxylysine modification. Positions 65–290 (ARVGFVGFPS…LLELMWEYLR (226 aa)) constitute an OBG-type G domain. Residues 71–78 (GFPSVGKS), 117–121 (DLPGI), and 248–251 (NKID) contribute to the GTP site. The TGS domain maps to 290–366 (RLQRIYTKPK…NDEDVVQIVK (77 aa)).

It belongs to the TRAFAC class OBG-HflX-like GTPase superfamily. OBG GTPase family. Post-translationally, hydroxylated (with S stereochemistry) at C-3 of Lys-22 by JMJD7. In terms of tissue distribution, expressed in posterior-lateral epidermis of the maxillary lobe.

Functionally, catalyzes the conversion of GTP to GDP through hydrolysis of the gamma-phosphate bond in GTP. Dfd/deformed is required to activate 128up in maxillary segment cells. The protein is Guanylate binding protein 128up of Drosophila melanogaster (Fruit fly).